A 241-amino-acid polypeptide reads, in one-letter code: Carboxy-S-adenosyl-L-methionine synthase 1 (241 aa).

S-adenosyl-L-methionine is bound by residues tyrosine 37, 61 to 63 (GCS), asparagine 131, and arginine 198.

This sequence belongs to the class I-like SAM-binding methyltransferase superfamily. Cx-SAM synthase family. As to quaternary structure, homodimer.

The enzyme catalyses prephenate + S-adenosyl-L-methionine = carboxy-S-adenosyl-L-methionine + 3-phenylpyruvate + H2O. Functionally, catalyzes the conversion of S-adenosyl-L-methionine (SAM) to carboxy-S-adenosyl-L-methionine (Cx-SAM). The polypeptide is Carboxy-S-adenosyl-L-methionine synthase 1 (Yersinia pseudotuberculosis serotype IB (strain PB1/+)).